The following is a 434-amino-acid chain: MKLPILVTLFITLPALCVSSKTPSAPTISAYPKSPGNFKPASGRQNSTSNVCEVKPNQTDAAPGILAAAHTCNNGGTVFLPPGDFVVATALDLTFLNNIDFAIWGNITFKKDIDLWTTQAFQYTFQTASLFWRFGGNNVNIYGDGKGVIDGAGQYWWSAMAEDSSVMRPCLLGTDGLHHATISGLTMLNSPNWFNLIANSTDILISNMTMLVESEISDAPAKNTDGWDIYRSSNIVIQDSRIVNTDDCVSFKPNSTQIVIQNLDCTGSHGISVGSLGQYQGETDIVEDLYIYNISMTDASDVARIKVWPGVPADTSGSTSGGGLGRVRNVTYEHMQSENNDHIISVSQCYESKNQTMCDSYPSKLVIEDVLFKDFKGTTSKKYDPEIGELTCSSPDVCHNITVQDINVTPPSGDSPTFTCNNMGNSNLEDITCA.

A signal peptide spans 1-19 (MKLPILVTLFITLPALCVS). N-linked (GlcNAc...) asparagine glycans are attached at residues asparagine 46, asparagine 57, asparagine 106, asparagine 199, and asparagine 207. A PbH1 1 repeat occupies 232 to 253 (SSNIVIQDSRIVNTDDCVSFKP). The Proton donor role is filled by aspartate 246. A disulfide bridge connects residues cysteine 248 and cysteine 265. Residue asparagine 254 is glycosylated (N-linked (GlcNAc...) asparagine). The PbH1 2 repeat unit spans residues 255-275 (STQIVIQNLDCTGSHGISVGS). Histidine 269 is an active-site residue. 3 N-linked (GlcNAc...) asparagine glycosylation sites follow: asparagine 293, asparagine 329, and asparagine 354. Cysteine 392 and cysteine 398 are oxidised to a cystine. The N-linked (GlcNAc...) asparagine glycan is linked to asparagine 400.

This sequence belongs to the glycosyl hydrolase 28 family.

Its subcellular location is the secreted. The enzyme catalyses [(1-&gt;4)-alpha-D-galacturonosyl](n) + H2O = alpha-D-galacturonate + [(1-&gt;4)-alpha-D-galacturonosyl](n-1). Specific in hydrolyzing the terminal glycosidic bond of polygalacturonic acid and oligogalacturonates. This is Probable exopolygalacturonase A (pgxA) from Aspergillus niger (strain ATCC MYA-4892 / CBS 513.88 / FGSC A1513).